The primary structure comprises 67 residues: Probable Sec-independent protein translocase protein TatE (67 aa).

Residues 4–21 form a helical membrane-spanning segment; sequence ISITKLLVVAALVVLLFG.

Belongs to the TatA/E family. TatE subfamily.

It localises to the cell inner membrane. Part of the twin-arginine translocation (Tat) system that transports large folded proteins containing a characteristic twin-arginine motif in their signal peptide across membranes. TatE shares overlapping functions with TatA. In Enterobacter cloacae subsp. cloacae (strain ATCC 13047 / DSM 30054 / NBRC 13535 / NCTC 10005 / WDCM 00083 / NCDC 279-56), this protein is Probable Sec-independent protein translocase protein TatE.